Here is a 499-residue protein sequence, read N- to C-terminus: Rhodopsin, GQ-coupled (499 aa).

Topologically, residues 1-50 are extracellular; that stretch reads MADNKSTLPGLPDINGTLNRSMTPNTGWEGPYDMSVHLHWTQFPPVTEEW. Residues asparagine 4, asparagine 15, and asparagine 19 are each glycosylated (N-linked (GlcNAc...) asparagine). A helical transmembrane segment spans residues 51-75; that stretch reads HYIIGVYITIVGLLGIMGNTTVVYI. The Cytoplasmic segment spans residues 76–87; it reads FSNTKSLRSPSN. Residues 88 to 114 form a helical membrane-spanning segment; sequence LFVVNLAVSDLIFSAVNGFPLLTVSSF. The Extracellular portion of the chain corresponds to 115 to 128; it reads HQKWIFGSLFCQLY. An intrachain disulfide couples cysteine 125 to cysteine 203. The helical transmembrane segment at 129–148 threads the bilayer; the sequence is GFVGGVFGLMSINTLTAISI. The Cytoplasmic portion of the chain corresponds to 149–168; sequence DRYVVITKPLQASQTMTRRK. Residues 169-192 form a helical membrane-spanning segment; the sequence is VHLMIVIVWVLSILLSIPPFFGWG. Over 193–216 the chain is Extracellular; that stretch reads AYIPEGFQTSCTFDYLTKTARTRT. A helical membrane pass occupies residues 217-244; the sequence is YIVVLYLFGFLIPLIIIGVCYVLIIRGV. The Cytoplasmic portion of the chain corresponds to 245-278; it reads RRHDQKMLTITRSMKTEDARANNKRARSELRISK. The helical transmembrane segment at 279-302 threads the bilayer; the sequence is IAMTVTCLFIISWSPYAIIALIAQ. The Extracellular segment spans residues 303–310; sequence FGPAHWIT. The chain crosses the membrane as a helical span at residues 311 to 335; sequence PLVSELPMMLAKSSSMHNPVVYALS. At lysine 322 the chain carries N6-(retinylidene)lysine. The Cytoplasmic portion of the chain corresponds to 336-499; it reads HPKFRKALYQ…QRVNGLTFNS (164 aa). S-palmitoyl cysteine attachment occurs at residues cysteine 353 and cysteine 354.

Belongs to the G-protein coupled receptor 1 family. Opsin subfamily. In terms of processing, phosphorylated on some or all of the serine and threonine residues present in the C-terminal region. In terms of tissue distribution, retina. Expressed in the depolarizing cell layer of the photoreceptor cells distant from the lens.

The protein resides in the membrane. Visual pigments such as rhodopsin and porphyropsin are light-absorbing molecules that mediate vision. Rhodopsin consists of an apoprotein, opsin, covalently linked to 11-cis-retinal. This receptor is coupled to the activation of phospholipase C. Porphyropsin consists of opsin covalently linked to 11-cis 3,4-didehydroretinal. This chain is Rhodopsin, GQ-coupled (SCOP1), found in Mizuhopecten yessoensis (Japanese scallop).